Consider the following 301-residue polypeptide: Homeobox protein knotted-1-like 1 (301 aa).

The tract at residues 141 to 170 (CSGATSPPATTATHSDEMVGSSDEDQCSGE) is disordered. Residues 144–153 (ATSPPATTAT) are compositionally biased toward low complexity. The ELK domain maps to 188–208 (ELKEMLLKKYSGCLSRLRSEF). Residues 209 to 272 (LKKRKKGKLP…NQRKRHWKPS (64 aa)) constitute a DNA-binding region (homeobox; TALE-type).

This sequence belongs to the TALE/KNOX homeobox family.

The protein localises to the nucleus. Functionally, probable transcription factor that may be involved in shoot formation during early embryogenesis. This is Homeobox protein knotted-1-like 1 (OSH6) from Oryza sativa subsp. japonica (Rice).